A 176-amino-acid polypeptide reads, in one-letter code: Shikimate kinase (176 aa).

17–24 (GMMGVGKS) is a binding site for ATP.

It belongs to the shikimate kinase family.

Its subcellular location is the cytoplasm. The enzyme catalyses shikimate + ATP = 3-phosphoshikimate + ADP + H(+). It functions in the pathway metabolic intermediate biosynthesis; chorismate biosynthesis; chorismate from D-erythrose 4-phosphate and phosphoenolpyruvate: step 5/7. This chain is Shikimate kinase, found in Zymomonas mobilis subsp. mobilis (strain ATCC 31821 / ZM4 / CP4).